A 445-amino-acid chain; its full sequence is Homoserine O-succinyltransferase (445 aa).

The region spanning 45–411 (NAVLICHALS…APHGHDSFLF (367 aa)) is the AB hydrolase-1 domain. Ser153 (nucleophile) is an active-site residue. Residue Arg223 coordinates substrate. Catalysis depends on residues Asp373 and His406. Asp407 serves as a coordination point for substrate.

It belongs to the AB hydrolase superfamily. MetX family. Homodimer.

It is found in the cytoplasm. It catalyses the reaction L-homoserine + succinyl-CoA = O-succinyl-L-homoserine + CoA. The protein operates within amino-acid biosynthesis; L-methionine biosynthesis via de novo pathway; O-succinyl-L-homoserine from L-homoserine: step 1/1. In terms of biological role, transfers a succinyl group from succinyl-CoA to L-homoserine, forming succinyl-L-homoserine. The polypeptide is Homoserine O-succinyltransferase (Psychrobacter arcticus (strain DSM 17307 / VKM B-2377 / 273-4)).